The primary structure comprises 381 residues: Protein-glutamate methylesterase/protein-glutamine glutaminase (381 aa).

One can recognise a Response regulatory domain in the interval 20–138 (RVMVVDDSVV…EIAAADIFKH (119 aa)). Asp71 is modified (4-aspartylphosphate). A disordered region spans residues 154–176 (PAALASAREPEPRPIQATPVPAH). One can recognise a CheB-type methylesterase domain in the interval 183-373 (PFSTHAPRAL…PLQQIAPKLV (191 aa)). Active-site residues include Ser197, His225, and Asp321.

The protein belongs to the CheB family. Post-translationally, phosphorylated by CheA. Phosphorylation of the N-terminal regulatory domain activates the methylesterase activity.

It localises to the cytoplasm. It carries out the reaction [protein]-L-glutamate 5-O-methyl ester + H2O = L-glutamyl-[protein] + methanol + H(+). The enzyme catalyses L-glutaminyl-[protein] + H2O = L-glutamyl-[protein] + NH4(+). Its function is as follows. Involved in chemotaxis. Part of a chemotaxis signal transduction system that modulates chemotaxis in response to various stimuli. Catalyzes the demethylation of specific methylglutamate residues introduced into the chemoreceptors (methyl-accepting chemotaxis proteins or MCP) by CheR. Also mediates the irreversible deamidation of specific glutamine residues to glutamic acid. This is Protein-glutamate methylesterase/protein-glutamine glutaminase from Nitrobacter hamburgensis (strain DSM 10229 / NCIMB 13809 / X14).